A 203-amino-acid polypeptide reads, in one-letter code: Small ribosomal subunit protein uS4c (203 aa).

Residues 19–43 (PGLTNKSPKAGSDLRKQPRSRKKSQ) are disordered. The S4 RNA-binding domain maps to 89-152 (MRLDNILFRL…KSRTLIQNSL (64 aa)).

Belongs to the universal ribosomal protein uS4 family. As to quaternary structure, part of the 30S ribosomal subunit. Contacts protein S5. The interaction surface between S4 and S5 is involved in control of translational fidelity.

Its subcellular location is the plastid. It is found in the chloroplast. Its function is as follows. One of the primary rRNA binding proteins, it binds directly to 16S rRNA where it nucleates assembly of the body of the 30S subunit. With S5 and S12 plays an important role in translational accuracy. This chain is Small ribosomal subunit protein uS4c (rps4), found in Jasminum nudiflorum (Winter jasmine).